Reading from the N-terminus, the 327-residue chain is Thiosulfate dehydrogenase (327 aa).

The N-terminal stretch at 1-26 is a signal peptide; sequence MKIIPYRKRSVLIATIFAISAVGITG. Low complexity predominate over residues 66–78; it reads NDMTATAGGTDTA. The segment at 66–93 is disordered; sequence NDMTATAGGTDTASGKPTIKMPDESTIP. Cytochrome c domains are found at residues 99–196 and 219–305; these read AAVR…SWLS and PNTD…THLP. 6 residues coordinate heme c: cysteine 125, cysteine 128, histidine 129, cysteine 232, cysteine 235, and histidine 236.

In terms of assembly, monomer. Binds 2 heme c groups covalently per subunit.

Its subcellular location is the periplasm. The enzyme catalyses 2 thiosulfate + 2 Fe(III)-[cytochrome c] = tetrathionate + 2 Fe(II)-[cytochrome c] + 2 H(+). Functionally, catalyzes the oxidation of 2 molecules of thiosulfate to tetrathionate. This Psychrobacter arcticus (strain DSM 17307 / VKM B-2377 / 273-4) protein is Thiosulfate dehydrogenase (tsdA).